Reading from the N-terminus, the 244-residue chain is Putative lipoprotein LprA (244 aa).

The N-terminal stretch at 1-24 (MKHPPCSVVAAATAILAVVLAIGG) is a signal peptide. Cys-25 is lipidated: N-palmitoyl cysteine. Cys-25 carries S-diacylglycerol cysteine lipidation.

The protein belongs to the LppX/LprAFG lipoprotein family.

Its subcellular location is the cell membrane. The sequence is that of Putative lipoprotein LprA (lprA) from Mycobacterium tuberculosis (strain CDC 1551 / Oshkosh).